The chain runs to 629 residues: tRNA uridine 5-carboxymethylaminomethyl modification enzyme MnmG (629 aa).

FAD contacts are provided by residues 14 to 19 (GAGHAG), valine 126, and serine 181. NAD(+) is bound at residue 273-287 (GPRYCPSIEDKVVRF). Glutamine 370 serves as a coordination point for FAD.

It belongs to the MnmG family. As to quaternary structure, homodimer. Heterotetramer of two MnmE and two MnmG subunits. FAD is required as a cofactor.

It localises to the cytoplasm. In terms of biological role, NAD-binding protein involved in the addition of a carboxymethylaminomethyl (cmnm) group at the wobble position (U34) of certain tRNAs, forming tRNA-cmnm(5)s(2)U34. This is tRNA uridine 5-carboxymethylaminomethyl modification enzyme MnmG from Bacillus cereus (strain ZK / E33L).